The chain runs to 454 residues: Phosphoglucosamine mutase (454 aa).

The Phosphoserine intermediate role is filled by Ser102. Mg(2+)-binding residues include Ser102, Asp247, Asp249, and Asp251. Phosphoserine is present on Ser102.

This sequence belongs to the phosphohexose mutase family. The cofactor is Mg(2+). Post-translationally, activated by phosphorylation.

It catalyses the reaction alpha-D-glucosamine 1-phosphate = D-glucosamine 6-phosphate. In terms of biological role, catalyzes the conversion of glucosamine-6-phosphate to glucosamine-1-phosphate. The sequence is that of Phosphoglucosamine mutase from Kineococcus radiotolerans (strain ATCC BAA-149 / DSM 14245 / SRS30216).